Reading from the N-terminus, the 556-residue chain is Probable zinc metalloprotease EGY2, chloroplastic (556 aa).

The N-terminal 64 residues, 1–64 (MNLAVASFRG…VFRKRETLVR (64 aa)), are a transit peptide targeting the chloroplast. The disordered stretch occupies residues 63 to 133 (VRVTETQTEP…DGDKLEVSSG (71 aa)). The next 7 membrane-spanning stretches (helical) occupy residues 267–287 (AVPE…TLFL), 311–331 (LPGA…HILV), 336–356 (GIKL…FGAI), 374–394 (AAGP…GLFV), 437–457 (PLVI…IPAG), 484–504 (LLGL…LIFF), and 527–547 (LGIL…FAFT).

Belongs to the peptidase M50B family.

Its subcellular location is the plastid. It localises to the chloroplast membrane. Probable membrane-associated metalloprotease that may be involved in chloroplast development. The chain is Probable zinc metalloprotease EGY2, chloroplastic (EGY2) from Arabidopsis thaliana (Mouse-ear cress).